A 404-amino-acid chain; its full sequence is Ribosomal RNA large subunit methyltransferase F (404 aa).

Basic residues-rich tracts occupy residues 1–10 and 18–29; these read MTKHSQKQNR and QTRRKKPAGKLK. 3 disordered regions span residues 1 to 54, 156 to 177, and 289 to 308; these read MTKH…HERN, GTRQ…QRYK, and RAAK…PDAN. Residues 30–54 are compositionally biased toward basic and acidic residues; the sequence is AKSEAKLDTRGKPETTEKKGLHERN. Over residues 157-172 the composition is skewed to polar residues; it reads TRQNVPYASKPESSAP.

This sequence belongs to the methyltransferase superfamily. METTL16/RlmF family.

It localises to the cytoplasm. The enzyme catalyses adenosine(1618) in 23S rRNA + S-adenosyl-L-methionine = N(6)-methyladenosine(1618) in 23S rRNA + S-adenosyl-L-homocysteine + H(+). Functionally, specifically methylates the adenine in position 1618 of 23S rRNA. This chain is Ribosomal RNA large subunit methyltransferase F, found in Shewanella sediminis (strain HAW-EB3).